Consider the following 327-residue polypeptide: Lipoyl synthase (327 aa).

Residues cysteine 66, cysteine 71, cysteine 77, cysteine 92, cysteine 96, cysteine 99, and serine 306 each coordinate [4Fe-4S] cluster. A Radical SAM core domain is found at 78–295 (FSKGTATFMI…EKEAYELGFT (218 aa)).

This sequence belongs to the radical SAM superfamily. Lipoyl synthase family. [4Fe-4S] cluster is required as a cofactor.

It localises to the cytoplasm. It catalyses the reaction [[Fe-S] cluster scaffold protein carrying a second [4Fe-4S](2+) cluster] + N(6)-octanoyl-L-lysyl-[protein] + 2 oxidized [2Fe-2S]-[ferredoxin] + 2 S-adenosyl-L-methionine + 4 H(+) = [[Fe-S] cluster scaffold protein] + N(6)-[(R)-dihydrolipoyl]-L-lysyl-[protein] + 4 Fe(3+) + 2 hydrogen sulfide + 2 5'-deoxyadenosine + 2 L-methionine + 2 reduced [2Fe-2S]-[ferredoxin]. Its pathway is protein modification; protein lipoylation via endogenous pathway; protein N(6)-(lipoyl)lysine from octanoyl-[acyl-carrier-protein]: step 2/2. Its function is as follows. Catalyzes the radical-mediated insertion of two sulfur atoms into the C-6 and C-8 positions of the octanoyl moiety bound to the lipoyl domains of lipoate-dependent enzymes, thereby converting the octanoylated domains into lipoylated derivatives. This is Lipoyl synthase from Neisseria gonorrhoeae (strain ATCC 700825 / FA 1090).